The sequence spans 58 residues: Microcin J25 (58 aa).

Positions 1–37 (MIKHFHFNKLSSGKKNNVPSPAKGVIQIKKSASQLTK) are excised as a propeptide. A cross-link (isoglutamyl glycine isopeptide (Gly-Glu)) is located at residues 38-45 (GGAGHVPE).

The protein resides in the secreted. Functionally, peptide antibiotic that functions through inhibition of the bacterial DNA-dependent RNA polymerase (RNAP). Inhibits transcription by binding deep within RNAP secondary channel, where it sterically blocks the folding of the trigger loop, which is essential for efficient catalysis. In addition, it also seems to restrict access of nucleotide substrates to the catalytic center, and shows a partially competitive mode of inhibition with them. Exhibits potent bacteriocidal activity against a range of Enterobacteriaceae, including several pathogenic E.coli, Salmonella and Shigella strains. Also acts on the cytoplasmic membrane of Salmonella newport, producing alteration of membrane permeability and disruption of the subsequent gradient dissipation, which inhibits several processes essential for cell viability, such as oxygen consumption. Induces bacterial filamentation in susceptible cells in a non-SOS-dependent way, but this phenotype may result from impaired transcription of genes coding for cell division proteins. The sequence is that of Microcin J25 (mcjA) from Escherichia coli.